The following is a 376-amino-acid chain: Actin, macronuclear (376 aa).

The protein belongs to the actin family.

It localises to the cytoplasm. The protein localises to the cytoskeleton. It carries out the reaction ATP + H2O = ADP + phosphate + H(+). Its function is as follows. Actins are highly conserved proteins that are involved in various types of cell motility and are ubiquitously expressed in all eukaryotic cells. The polypeptide is Actin, macronuclear (Tetrahymena thermophila).